The following is a 464-amino-acid chain: Kynureninase 2 (464 aa).

Residues leucine 135, threonine 136, 163-166 (FPSD), aspartate 248, histidine 251, and tyrosine 273 each bind pyridoxal 5'-phosphate. At lysine 274 the chain carries N6-(pyridoxal phosphate)lysine. The pyridoxal 5'-phosphate site is built by tryptophan 313 and asparagine 341.

The protein belongs to the kynureninase family. As to quaternary structure, homodimer. Pyridoxal 5'-phosphate serves as cofactor.

Its subcellular location is the cytoplasm. The catalysed reaction is L-kynurenine + H2O = anthranilate + L-alanine + H(+). It catalyses the reaction 3-hydroxy-L-kynurenine + H2O = 3-hydroxyanthranilate + L-alanine + H(+). The protein operates within amino-acid degradation; L-kynurenine degradation; L-alanine and anthranilate from L-kynurenine: step 1/1. It participates in cofactor biosynthesis; NAD(+) biosynthesis; quinolinate from L-kynurenine: step 2/3. Its function is as follows. Catalyzes the cleavage of L-kynurenine (L-Kyn) and L-3-hydroxykynurenine (L-3OHKyn) into anthranilic acid (AA) and 3-hydroxyanthranilic acid (3-OHAA), respectively. The protein is Kynureninase 2 (bna5-2) of Aspergillus fumigatus (strain CBS 144.89 / FGSC A1163 / CEA10) (Neosartorya fumigata).